Here is a 379-residue protein sequence, read N- to C-terminus: UDP-4-amino-4-deoxy-L-arabinose--oxoglutarate aminotransferase (379 aa).

At K182 the chain carries N6-(pyridoxal phosphate)lysine.

The protein belongs to the DegT/DnrJ/EryC1 family. ArnB subfamily. In terms of assembly, homodimer. The cofactor is pyridoxal 5'-phosphate.

The catalysed reaction is UDP-4-amino-4-deoxy-beta-L-arabinose + 2-oxoglutarate = UDP-beta-L-threo-pentopyranos-4-ulose + L-glutamate. It functions in the pathway nucleotide-sugar biosynthesis; UDP-4-deoxy-4-formamido-beta-L-arabinose biosynthesis; UDP-4-deoxy-4-formamido-beta-L-arabinose from UDP-alpha-D-glucuronate: step 2/3. It participates in bacterial outer membrane biogenesis; lipopolysaccharide biosynthesis. Its function is as follows. Catalyzes the conversion of UDP-4-keto-arabinose (UDP-Ara4O) to UDP-4-amino-4-deoxy-L-arabinose (UDP-L-Ara4N). The modified arabinose is attached to lipid A and is required for resistance to polymyxin and cationic antimicrobial peptides. This is UDP-4-amino-4-deoxy-L-arabinose--oxoglutarate aminotransferase from Escherichia fergusonii (strain ATCC 35469 / DSM 13698 / CCUG 18766 / IAM 14443 / JCM 21226 / LMG 7866 / NBRC 102419 / NCTC 12128 / CDC 0568-73).